A 513-amino-acid polypeptide reads, in one-letter code: Nitrogenase molybdenum-iron protein beta chain (513 aa).

The [8Fe-7S] cluster site is built by cysteine 70, cysteine 95, and cysteine 153.

This sequence belongs to the NifD/NifK/NifE/NifN family. Tetramer of two alpha and two beta chains. Forms complex with the iron protein (nitrogenase component 2). [8Fe-7S] cluster serves as cofactor.

It carries out the reaction N2 + 8 reduced [2Fe-2S]-[ferredoxin] + 16 ATP + 16 H2O = H2 + 8 oxidized [2Fe-2S]-[ferredoxin] + 2 NH4(+) + 16 ADP + 16 phosphate + 6 H(+). In terms of biological role, this molybdenum-iron protein is part of the nitrogenase complex that catalyzes the key enzymatic reactions in nitrogen fixation. In Sinorhizobium fredii (strain NBRC 101917 / NGR234), this protein is Nitrogenase molybdenum-iron protein beta chain (nifK1).